The following is a 730-amino-acid chain: Elongation factor 2 (730 aa).

Positions 19-229 (LMIRNIGIVA…GVSFSEVFNY (211 aa)) constitute a tr-type G domain. GTP is bound by residues 28-35 (AHIDHGKT), 94-98 (DTPGH), and 148-151 (NKVD). The residue at position 596 (His-596) is a Diphthamide.

The protein belongs to the TRAFAC class translation factor GTPase superfamily. Classic translation factor GTPase family. EF-G/EF-2 subfamily.

The protein resides in the cytoplasm. Functionally, catalyzes the GTP-dependent ribosomal translocation step during translation elongation. During this step, the ribosome changes from the pre-translocational (PRE) to the post-translocational (POST) state as the newly formed A-site-bound peptidyl-tRNA and P-site-bound deacylated tRNA move to the P and E sites, respectively. Catalyzes the coordinated movement of the two tRNA molecules, the mRNA and conformational changes in the ribosome. The polypeptide is Elongation factor 2 (fusA) (Methanococcoides burtonii (strain DSM 6242 / NBRC 107633 / OCM 468 / ACE-M)).